Here is a 134-residue protein sequence, read N- to C-terminus: Small ribosomal subunit protein uS12 (134 aa).

Asp-89 is subject to 3-methylthioaspartic acid. The interval 109–134 (KRNVSRSKYGAKKGKAGAAPTTGKKK) is disordered. The span at 111 to 123 (NVSRSKYGAKKGK) shows a compositional bias: basic residues. Residues 124–134 (AGAAPTTGKKK) are compositionally biased toward low complexity.

The protein belongs to the universal ribosomal protein uS12 family. Part of the 30S ribosomal subunit. Contacts proteins S8 and S17. May interact with IF1 in the 30S initiation complex.

Functionally, with S4 and S5 plays an important role in translational accuracy. Interacts with and stabilizes bases of the 16S rRNA that are involved in tRNA selection in the A site and with the mRNA backbone. Located at the interface of the 30S and 50S subunits, it traverses the body of the 30S subunit contacting proteins on the other side and probably holding the rRNA structure together. The combined cluster of proteins S8, S12 and S17 appears to hold together the shoulder and platform of the 30S subunit. The chain is Small ribosomal subunit protein uS12 from Wolinella succinogenes (strain ATCC 29543 / DSM 1740 / CCUG 13145 / JCM 31913 / LMG 7466 / NCTC 11488 / FDC 602W) (Vibrio succinogenes).